Reading from the N-terminus, the 338-residue chain is MRVLVTGGSGYIGSHTCVQLLQNGHDVIILDNLCNSKRSVLPVIERLGGKHPTFVEGDIRNEALMTEILHDHAIDTVIHFAGLKAVGESVQKPLEYYDNNVNGTLRLISAMRAANVKNFIFSSSATVYGDQPKIPYVESFPTGTPQSPYGKSKLMVEQILTDLQKAQPDWSIALLRYFNPVGAHPSGDMGEDPQGIPNNLMPYIAQVAVGRRDSLAIFGNDYPTEDGTGVRDYIHVMDLADGHVVAMEKLANKPGVHIYNLGAGVGNSVLDVVNAFSKACGKPVNYHFAPRREGDLPAYWADASKADRELNWRVTRTLDEMAQDTWHWQSRHPQGYPD.

Residues 11 to 12 (YI), 31 to 36 (DNLCNS), 58 to 59 (DI), 80 to 84 (FAGLK), Asn-99, Ser-124, Tyr-149, Lys-153, and Phe-178 each bind NAD(+). The substrate site is built by Ser-124 and Tyr-149. Catalysis depends on Tyr-149, which acts as the Proton acceptor. Substrate is bound by residues Asn-179, 199 to 200 (NL), 216 to 218 (AIF), Arg-231, 292 to 295 (REGD), and Tyr-299.

It belongs to the NAD(P)-dependent epimerase/dehydratase family. As to quaternary structure, homodimer. It depends on NAD(+) as a cofactor.

It carries out the reaction UDP-alpha-D-glucose = UDP-alpha-D-galactose. Its pathway is carbohydrate metabolism; galactose metabolism. Its activity is regulated as follows. Inhibited by UDP-phenol and NaBH3CN. In terms of biological role, involved in the metabolism of galactose. Catalyzes the conversion of UDP-galactose (UDP-Gal) to UDP-glucose (UDP-Glc) through a mechanism involving the transient reduction of NAD. It is only active on UDP-galactose and UDP-glucose. This chain is UDP-glucose 4-epimerase (galE), found in Escherichia coli (strain K12).